We begin with the raw amino-acid sequence, 350 residues long: tRNA uridine(34) hydroxylase (350 aa).

The region spanning 146–240 is the Rhodanese domain; sequence DDPDALFIDM…YARKAREQGL (95 aa). Cysteine 200 acts as the Cysteine persulfide intermediate in catalysis.

The protein belongs to the TrhO family.

It catalyses the reaction uridine(34) in tRNA + AH2 + O2 = 5-hydroxyuridine(34) in tRNA + A + H2O. In terms of biological role, catalyzes oxygen-dependent 5-hydroxyuridine (ho5U) modification at position 34 in tRNAs, the first step in 5-carboxymethoxyuridine (cmo5U) biosynthesis. May be part of an alternate pathway, which is able to bypass cmo5U biogenesis in a subset of tRNAs under aerobic conditions. The sequence is that of tRNA uridine(34) hydroxylase from Escherichia coli (strain SE11).